The sequence spans 322 residues: uncharacterized protein (322 aa).

2 stretches are compositionally biased toward basic residues: residues 1–16 (MPGNSRRRGAVRKSGT) and 43–61 (LRPHHPAAKRARAQPRRPV). Positions 1–69 (MPGNSRRRGA…PVKRADETET (69 aa)) are disordered. S-adenosyl-L-methionine contacts are provided by glycine 261, isoleucine 281, and leucine 290.

The protein belongs to the class IV-like SAM-binding methyltransferase superfamily. RNA methyltransferase TrmH family.

This is an uncharacterized protein from Mycobacterium tuberculosis (strain CDC 1551 / Oshkosh).